The chain runs to 628 residues: 2-oxoacid:ferredoxin oxidoreductase 2, subunit alpha (628 aa).

Residues 254–258 (YPITP) carry the YPITP motif motif. Residues T257 and R344 each contribute to the substrate site.

As to quaternary structure, heterodimer composed of an alpha and a beta subunit.

It carries out the reaction a 2-oxocarboxylate + 2 oxidized [2Fe-2S]-[ferredoxin] + CoA = an acyl-CoA + 2 reduced [2Fe-2S]-[ferredoxin] + CO2 + H(+). In terms of biological role, catalyzes the coenzyme A-dependent oxidative decarboxylation of different 2-oxoacids such as 2-oxoglutarate, pyruvate and 2-oxobutyrate to form their CoA derivatives. This Sulfurisphaera tokodaii (strain DSM 16993 / JCM 10545 / NBRC 100140 / 7) (Sulfolobus tokodaii) protein is 2-oxoacid:ferredoxin oxidoreductase 2, subunit alpha.